We begin with the raw amino-acid sequence, 542 residues long: CTP synthase (542 aa).

An amidoligase domain region spans residues 1–265 (MARYVFITGG…DSEVLSAFGI (265 aa)). Serine 13 serves as a coordination point for CTP. Residue serine 13 participates in UTP binding. An ATP-binding site is contributed by 14–19 (SLGKGI). Tyrosine 54 contacts L-glutamine. ATP is bound at residue aspartate 71. Mg(2+)-binding residues include aspartate 71 and glutamate 139. Residues 146–148 (DIE), 186–191 (KTKPTQ), and lysine 222 contribute to the CTP site. UTP contacts are provided by residues 186-191 (KTKPTQ) and lysine 222. In terms of domain architecture, Glutamine amidotransferase type-1 spans 291–541 (TIAIVGKYTG…IEAAIEQSRL (251 aa)). Glycine 353 provides a ligand contact to L-glutamine. Cysteine 380 (nucleophile; for glutamine hydrolysis) is an active-site residue. L-glutamine-binding positions include 381–384 (FGMQ), glutamate 404, and arginine 469. Active-site residues include histidine 514 and glutamate 516.

The protein belongs to the CTP synthase family. As to quaternary structure, homotetramer.

The enzyme catalyses UTP + L-glutamine + ATP + H2O = CTP + L-glutamate + ADP + phosphate + 2 H(+). It catalyses the reaction L-glutamine + H2O = L-glutamate + NH4(+). It carries out the reaction UTP + NH4(+) + ATP = CTP + ADP + phosphate + 2 H(+). It functions in the pathway pyrimidine metabolism; CTP biosynthesis via de novo pathway; CTP from UDP: step 2/2. Its activity is regulated as follows. Allosterically activated by GTP, when glutamine is the substrate; GTP has no effect on the reaction when ammonia is the substrate. The allosteric effector GTP functions by stabilizing the protein conformation that binds the tetrahedral intermediate(s) formed during glutamine hydrolysis. Inhibited by the product CTP, via allosteric rather than competitive inhibition. Catalyzes the ATP-dependent amination of UTP to CTP with either L-glutamine or ammonia as the source of nitrogen. Regulates intracellular CTP levels through interactions with the four ribonucleotide triphosphates. This chain is CTP synthase, found in Brucella anthropi (strain ATCC 49188 / DSM 6882 / CCUG 24695 / JCM 21032 / LMG 3331 / NBRC 15819 / NCTC 12168 / Alc 37) (Ochrobactrum anthropi).